The chain runs to 496 residues: RNA-binding motif protein, Y chromosome, family 1 member D (496 aa).

An RRM domain is found at Gly-8–Lys-85. Disordered regions lie at residues Asp-67–Tyr-349 and Lys-452–Tyr-496. Composition is skewed to low complexity over residues Pro-97–Gly-114 and Pro-149–Gly-159. Residues Asn-175 to Met-184 show a composition bias toward polar residues. Composition is skewed to basic and acidic residues over residues Arg-204 to Gly-214, Asp-242 to Ser-253, Ala-276 to Tyr-289, Gly-313 to Tyr-326, Ser-335 to Tyr-349, and Gly-484 to Tyr-496.

In terms of assembly, interacts with splicing factor proteins SFRS3/SRP20, TRA2B/SFRS10, KHDRBS1/SAM68 and KHDRBS3. In terms of tissue distribution, testis-specific.

The protein resides in the nucleus. In terms of biological role, RNA-binding protein which may be involved in spermatogenesis. Required for sperm development, possibly by participating in pre-mRNA splicing in the testis. The chain is RNA-binding motif protein, Y chromosome, family 1 member D (RBMY1D) from Homo sapiens (Human).